The following is a 91-amino-acid chain: Large ribosomal subunit protein uL23 (91 aa).

It belongs to the universal ribosomal protein uL23 family. Part of the 50S ribosomal subunit. Contacts protein L29, and trigger factor when it is bound to the ribosome.

One of the early assembly proteins it binds 23S rRNA. One of the proteins that surrounds the polypeptide exit tunnel on the outside of the ribosome. Forms the main docking site for trigger factor binding to the ribosome. This Staphylococcus epidermidis (strain ATCC 35984 / DSM 28319 / BCRC 17069 / CCUG 31568 / BM 3577 / RP62A) protein is Large ribosomal subunit protein uL23.